The chain runs to 173 residues: Small ribosomal subunit protein uS9 (173 aa).

Positions 1 to 15 (MTDTPTENLENTEVT) are enriched in polar residues. 2 disordered regions span residues 1–26 (MTDTPTENLENTEVTPFTEGDREIAY) and 135–173 (EASRPALKKAGMLTRDARVKERKKAGLKKARKAPQYSKR). The segment covering 154 to 173 (KERKKAGLKKARKAPQYSKR) has biased composition (basic residues).

The protein belongs to the universal ribosomal protein uS9 family.

The sequence is that of Small ribosomal subunit protein uS9 from Cutibacterium acnes (strain DSM 16379 / KPA171202) (Propionibacterium acnes).